Consider the following 258-residue polypeptide: Glutamate racemase (258 aa).

Substrate-binding positions include 11–12 (DS) and 43–44 (YG). Catalysis depends on Cys74, which acts as the Proton donor/acceptor. 75–76 (NT) serves as a coordination point for substrate. Catalysis depends on Cys182, which acts as the Proton donor/acceptor. Position 183 to 184 (183 to 184 (TH)) interacts with substrate.

This sequence belongs to the aspartate/glutamate racemases family.

The enzyme catalyses L-glutamate = D-glutamate. The protein operates within cell wall biogenesis; peptidoglycan biosynthesis. Its function is as follows. Provides the (R)-glutamate required for cell wall biosynthesis. The chain is Glutamate racemase from Leptospira borgpetersenii serovar Hardjo-bovis (strain JB197).